The following is a 453-amino-acid chain: Trigger factor (453 aa).

Residues 171 to 256 (GDRVTINFKG…ATSIEAPQDI (86 aa)) enclose the PPIase FKBP-type domain.

Belongs to the FKBP-type PPIase family. Tig subfamily.

It is found in the cytoplasm. The enzyme catalyses [protein]-peptidylproline (omega=180) = [protein]-peptidylproline (omega=0). Functionally, involved in protein export. Acts as a chaperone by maintaining the newly synthesized protein in an open conformation. Functions as a peptidyl-prolyl cis-trans isomerase. The protein is Trigger factor of Bradyrhizobium diazoefficiens (strain JCM 10833 / BCRC 13528 / IAM 13628 / NBRC 14792 / USDA 110).